We begin with the raw amino-acid sequence, 383 residues long: Adaptive-response sensory kinase SasA (383 aa).

Residues 161–383 form the Histidine kinase domain; sequence MLAHDLRSPL…SFHFTLPVYR (223 aa). His164 bears the Phosphohistidine; by autocatalysis mark.

As to quaternary structure, homooligomerizes. Interacts with KaiC1. Interacts with KaiC1 and RpaA. Binds to the B-loop in the CI domain of KaiC; SasA and KaiB compete to bind to the CI domain.

It carries out the reaction ATP + protein L-histidine = ADP + protein N-phospho-L-histidine.. Its function is as follows. Member of the two-component regulatory system SasA/RpaA involved in genome-wide circadian gene expression. One of several clock output pathways. Participates in the Kai clock protein complex, the main circadian regulator in cyanobacteria, via its interaction with KaiC. KaiC enhances the autophosphorylation activity of SasA, which then transfers its phosphate group to RpaA to activate it. In addition to its output function, recruits fold-shifted KaiB (KaiB(fs)) to KaiC to cooperatively form the KaiB(6):KaiC(6) complex (independent of SasA kinase activity). Required for robustness of the circadian rhythm of gene expression and is involved in clock output, also required for adaptation to light/dark cycles. Functionally, plays an important role in glucose metabolism, important for expression of genes involved in glycolysis, gluconeogenesis, the oxidative pentose phosphate pathway, and glycogen metabolism. Required for heterotrophic growth. Overexpression from the psbAII promoter leads to altered levels of genes involved in carbon metabolism, increased levels of transcripts for clock oscillator genes in the light and the dark, complete loss of glycogen accumulation, decreased levels of metabolites of sugar catabolism and increased levels of amino acids in the light and increased levels of SigE protein. In Synechocystis sp. (strain ATCC 27184 / PCC 6803 / Kazusa), this protein is Adaptive-response sensory kinase SasA.